The primary structure comprises 212 residues: Abscisic acid receptor PYL10 (212 aa).

Residues 34 to 191 (YAVGPGQCSS…NLQKLKSVSE (158 aa)) are START-like. Residues lysine 70, 107–112 (ASTSTE), 134–140 (RLRNYRS), and glutamate 156 each bind abscisate. Positions 103–107 (SGLPA) match the Gate loop motif. The Latch loop motif lies at 133–135 (HRL).

It belongs to the PYR/PYL/RCAR abscisic acid intracellular receptor family. As to quaternary structure, homodimer. Interacts with PP2C53. Binding to PP2C53 is dependent on the presence of abscisic acid (ABA). Interacts with PP2C50. Binding to PP2C50 is dependent on the presence of ABA.

Its subcellular location is the cytoplasm. The protein localises to the cytosol. It localises to the nucleus. Functionally, inhibits the protein phosphatases PP2C06 and PP2C09 when activated by abscisic acid (ABA). Together with PP2C53, SAPK8 and SAPK10, may form an ABA signaling module involved in stress response. The protein is Abscisic acid receptor PYL10 of Oryza sativa subsp. japonica (Rice).